A 221-amino-acid chain; its full sequence is UPF0758 protein HI_0952 (221 aa).

Residues 99–221 (IINDPETVKL…CYSFAENCLL (123 aa)) form the MPN domain. Residues His170, His172, and Asp183 each contribute to the Zn(2+) site. Positions 170–183 (HNHPSGITEPSYSD) match the JAMM motif motif.

The protein belongs to the UPF0758 family.

The polypeptide is UPF0758 protein HI_0952 (Haemophilus influenzae (strain ATCC 51907 / DSM 11121 / KW20 / Rd)).